The sequence spans 398 residues: 1-deoxy-D-xylulose 5-phosphate reductoisomerase (398 aa).

Residues Thr21, Gly22, Ser23, Ile24, Gly47, Asn50, and Asn127 each coordinate NADPH. Lys128 lines the 1-deoxy-D-xylulose 5-phosphate pocket. Glu129 is an NADPH binding site. Mn(2+) is bound at residue Asp151. 1-deoxy-D-xylulose 5-phosphate is bound by residues Ser152, Glu153, Ser177, and His200. Glu153 lines the Mn(2+) pocket. Gly206 provides a ligand contact to NADPH. The 1-deoxy-D-xylulose 5-phosphate site is built by Ser213, Asn218, Lys219, and Glu222. Glu222 provides a ligand contact to Mn(2+).

It belongs to the DXR family. The cofactor is Mg(2+). Mn(2+) serves as cofactor.

The catalysed reaction is 2-C-methyl-D-erythritol 4-phosphate + NADP(+) = 1-deoxy-D-xylulose 5-phosphate + NADPH + H(+). The protein operates within isoprenoid biosynthesis; isopentenyl diphosphate biosynthesis via DXP pathway; isopentenyl diphosphate from 1-deoxy-D-xylulose 5-phosphate: step 1/6. Functionally, catalyzes the NADPH-dependent rearrangement and reduction of 1-deoxy-D-xylulose-5-phosphate (DXP) to 2-C-methyl-D-erythritol 4-phosphate (MEP). The polypeptide is 1-deoxy-D-xylulose 5-phosphate reductoisomerase (Mycolicibacterium smegmatis (strain ATCC 700084 / mc(2)155) (Mycobacterium smegmatis)).